Consider the following 409-residue polypeptide: Tryptophan synthase beta chain (409 aa).

At lysine 98 the chain carries N6-(pyridoxal phosphate)lysine.

This sequence belongs to the TrpB family. Tetramer of two alpha and two beta chains. Requires pyridoxal 5'-phosphate as cofactor.

It carries out the reaction (1S,2R)-1-C-(indol-3-yl)glycerol 3-phosphate + L-serine = D-glyceraldehyde 3-phosphate + L-tryptophan + H2O. It functions in the pathway amino-acid biosynthesis; L-tryptophan biosynthesis; L-tryptophan from chorismate: step 5/5. Functionally, the beta subunit is responsible for the synthesis of L-tryptophan from indole and L-serine. This is Tryptophan synthase beta chain from Jannaschia sp. (strain CCS1).